We begin with the raw amino-acid sequence, 308 residues long: Homeobox-leucine zipper protein HOX2 (308 aa).

2 disordered regions span residues 15–36 (QGSL…SSPW) and 71–117 (QGRA…RKKL). Residues 74-88 (ASTSPDSAAALSSAS) are compositionally biased toward low complexity. The homeobox DNA-binding region spans 112–171 (GGRKKLRLSKDQAAVLEECFKTHSTLNPKQKVALANRLGLRPRQVEVWFQNRRARTKLKQ). Residues 170-214 (KQTEVDCEYLKRWCERLADENKRLEKELADLRALKAAPSPASASA) are leucine-zipper.

This sequence belongs to the HD-ZIP homeobox family. Class II subfamily. Homodimer. May form a heterodimer with HOX1, HOX3 or HOX7. In terms of tissue distribution, expressed in seedlings, roots, leaves, nodes, internodes, flowers and embryo.

The protein localises to the nucleus. Functionally, probable transcription factor that binds to the DNA sequence 5'-CAAT[GC]ATTG-3'. The polypeptide is Homeobox-leucine zipper protein HOX2 (HOX2) (Oryza sativa subsp. indica (Rice)).